The chain runs to 178 residues: Interleukin-10 (178 aa).

The N-terminal stretch at 1 to 18 is a signal peptide; the sequence is MHSSALLCFLVFLAGVGA. An N-linked (GlcNAc...) asparagine glycan is attached at Asn-29. Disulfide bonds link Cys-30–Cys-126 and Cys-80–Cys-132. The N-linked (GlcNAc...) asparagine glycan is linked to Asn-134.

The protein belongs to the IL-10 family. In terms of assembly, homodimer. Interacts with IL10RA and IL10RB.

The protein localises to the secreted. Major immune regulatory cytokine that acts on many cells of the immune system where it has profound anti-inflammatory functions, limiting excessive tissue disruption caused by inflammation. Mechanistically, IL10 binds to its heterotetrameric receptor comprising IL10RA and IL10RB leading to JAK1 and STAT2-mediated phosphorylation of STAT3. In turn, STAT3 translocates to the nucleus where it drives expression of anti-inflammatory mediators. Targets antigen-presenting cells (APCs) such as macrophages and monocytes and inhibits their release of pro-inflammatory cytokines including granulocyte-macrophage colony-stimulating factor /GM-CSF, granulocyte colony-stimulating factor/G-CSF, IL-1 alpha, IL-1 beta, IL-6, IL-8 and TNF-alpha. Also interferes with antigen presentation by reducing the expression of MHC-class II and co-stimulatory molecules, thereby inhibiting their ability to induce T cell activation. In addition, controls the inflammatory response of macrophages by reprogramming essential metabolic pathways including mTOR signaling. The protein is Interleukin-10 (IL10) of Felis catus (Cat).